The chain runs to 115 residues: Small ribosomal subunit protein bS16 (115 aa).

The interval 81 to 115 (GLAPKPTYNEQPKKSAPKAKAQERAKAAADAAAAA) is disordered.

Belongs to the bacterial ribosomal protein bS16 family.

This chain is Small ribosomal subunit protein bS16, found in Gluconobacter oxydans (strain 621H) (Gluconobacter suboxydans).